The primary structure comprises 306 residues: D-alanine--D-alanine ligase (306 aa).

One can recognise an ATP-grasp domain in the interval 101 to 303; that stretch reads KQVWQAVGLP…FSQLVVKILE (203 aa). ATP is bound at residue 134–189; it reads FTHLGLPLIVKPSREGSSVGMSKVNTLSDLPAALEEAFRHDDDVLVEKWLSGPEYT. Residues aspartate 257, glutamate 270, and asparagine 272 each contribute to the Mg(2+) site.

The protein belongs to the D-alanine--D-alanine ligase family. Mg(2+) is required as a cofactor. Requires Mn(2+) as cofactor.

It localises to the cytoplasm. The catalysed reaction is 2 D-alanine + ATP = D-alanyl-D-alanine + ADP + phosphate + H(+). It participates in cell wall biogenesis; peptidoglycan biosynthesis. Functionally, cell wall formation. The protein is D-alanine--D-alanine ligase of Pectobacterium atrosepticum (strain SCRI 1043 / ATCC BAA-672) (Erwinia carotovora subsp. atroseptica).